The chain runs to 185 residues: Potassium-transporting ATPase KdpC subunit (185 aa).

A helical membrane pass occupies residues 14 to 34 (ALSLLTGVAYPLALTGIAAVI). The interval 105–128 (AQNGAPAPVDAVTASGSGLDPHVS) is disordered.

It belongs to the KdpC family. As to quaternary structure, the system is composed of three essential subunits: KdpA, KdpB and KdpC.

It is found in the cell inner membrane. In terms of biological role, part of the high-affinity ATP-driven potassium transport (or Kdp) system, which catalyzes the hydrolysis of ATP coupled with the electrogenic transport of potassium into the cytoplasm. This subunit acts as a catalytic chaperone that increases the ATP-binding affinity of the ATP-hydrolyzing subunit KdpB by the formation of a transient KdpB/KdpC/ATP ternary complex. In Cereibacter sphaeroides (strain ATCC 17029 / ATH 2.4.9) (Rhodobacter sphaeroides), this protein is Potassium-transporting ATPase KdpC subunit.